The chain runs to 239 residues: Ribonuclease PH (239 aa).

Phosphate contacts are provided by residues R86 and 124–126 (GTR).

Belongs to the RNase PH family. As to quaternary structure, homohexameric ring arranged as a trimer of dimers.

It carries out the reaction tRNA(n+1) + phosphate = tRNA(n) + a ribonucleoside 5'-diphosphate. Its function is as follows. Phosphorolytic 3'-5' exoribonuclease that plays an important role in tRNA 3'-end maturation. Removes nucleotide residues following the 3'-CCA terminus of tRNAs; can also add nucleotides to the ends of RNA molecules by using nucleoside diphosphates as substrates, but this may not be physiologically important. Probably plays a role in initiation of 16S rRNA degradation (leading to ribosome degradation) during starvation. This chain is Ribonuclease PH, found in Allorhizobium ampelinum (strain ATCC BAA-846 / DSM 112012 / S4) (Agrobacterium vitis (strain S4)).